Consider the following 129-residue polypeptide: Large ribosomal subunit protein bL12 (129 aa).

The protein belongs to the bacterial ribosomal protein bL12 family. Homodimer. Part of the ribosomal stalk of the 50S ribosomal subunit. Forms a multimeric L10(L12)X complex, where L10 forms an elongated spine to which 2 to 4 L12 dimers bind in a sequential fashion. Binds GTP-bound translation factors.

Functionally, forms part of the ribosomal stalk which helps the ribosome interact with GTP-bound translation factors. Is thus essential for accurate translation. The chain is Large ribosomal subunit protein bL12 from Photobacterium profundum (strain SS9).